We begin with the raw amino-acid sequence, 921 residues long: Isoleucine--tRNA ligase (921 aa).

A 'HIGH' region motif is present at residues 57 to 67 (PYANGNIHVGT). Glu551 provides a ligand contact to L-isoleucyl-5'-AMP. The 'KMSKS' region signature appears at 592–596 (KMSKS). Lys595 is an ATP binding site. 4 residues coordinate Zn(2+): Cys885, Cys888, Cys905, and Cys908.

It belongs to the class-I aminoacyl-tRNA synthetase family. IleS type 1 subfamily. As to quaternary structure, monomer. Zn(2+) serves as cofactor.

The protein localises to the cytoplasm. It catalyses the reaction tRNA(Ile) + L-isoleucine + ATP = L-isoleucyl-tRNA(Ile) + AMP + diphosphate. In terms of biological role, catalyzes the attachment of isoleucine to tRNA(Ile). As IleRS can inadvertently accommodate and process structurally similar amino acids such as valine, to avoid such errors it has two additional distinct tRNA(Ile)-dependent editing activities. One activity is designated as 'pretransfer' editing and involves the hydrolysis of activated Val-AMP. The other activity is designated 'posttransfer' editing and involves deacylation of mischarged Val-tRNA(Ile). This is Isoleucine--tRNA ligase from Kosmotoga olearia (strain ATCC BAA-1733 / DSM 21960 / TBF 19.5.1).